Here is a 319-residue protein sequence, read N- to C-terminus: COP9 signalosome complex subunit 6 (319 aa).

An MPN domain is found at 33–166 (VALHPLVILN…VSVYESVIDI (134 aa)).

This sequence belongs to the peptidase M67A family. CSN6 subfamily. Component of the CSN complex, probably composed of cops1, cops2, cops3, cops4, cops5, cops6, cops7, cops8 and cops9.

It localises to the cytoplasm. Its subcellular location is the nucleus. Component of the COP9 signalosome complex (CSN), a complex involved in various cellular and developmental processes. The CSN complex is an essential regulator of the ubiquitin (Ubl) conjugation pathway by mediating the deneddylation of the cullin subunits of E3 ligase complexes, leading to modify the Ubl ligase activity. In Xenopus tropicalis (Western clawed frog), this protein is COP9 signalosome complex subunit 6 (cops6).